The sequence spans 301 residues: MATTKRVLYVGGLAEEVDDKVLHAAFIPFGDITDIQIPLDYETEKHRGFAFVEFELAEDAAAAIDNMNESELFGRTIRVNLAKPMRIKEGSSRPVWSDDDWLKKFSGKTLEENKEEEGSEPPKAETQEGEPAAKKARSNPQVYMDIKIGNKPAGRIQMLLRSDVVPMTAENFRCLCTHEKGFGFKGSSFHRIIPQFMCQGGDFTNHNGTGGKSIYGKKFDDENFILKHTGPGLLSMANSGPNTNGSQFFLTCDKTDWLDGKHVVFGEVTEGLDVLRQIEARGSKDGKPKQKVIIADCGEYV.

Positions 5–83 (KRVLYVGGLA…GRTIRVNLAK (79 aa)) constitute an RRM domain. Phosphoserine is present on residues Ser91, Ser97, and Ser119. The disordered stretch occupies residues 107 to 140 (GKTLEENKEEEGSEPPKAETQEGEPAAKKARSNP). The PPIase cyclophilin-type domain maps to 143 to 299 (YMDIKIGNKP…QKVIIADCGE (157 aa)).

This sequence belongs to the cyclophilin-type PPIase family. PPIase E subfamily. As to quaternary structure, identified in the spliceosome C complex. Component of the XAB2 complex, a multimeric protein complex composed of XAB2, PRPF19, AQR, ZNF830, ISY1, and PPIE. Identified in a pentameric intron-binding (IB) complex composed of AQR, XAB2, ISY1, ZNF830 and PPIE that is incorporated into the spliceosome as a preassembled complex. The IB complex does not contain PRPF19. Interacts (via RNA-binding domain) with KMT2A (via the third PHD-type zinc-finger).

Its subcellular location is the nucleus. It catalyses the reaction [protein]-peptidylproline (omega=180) = [protein]-peptidylproline (omega=0). Involved in pre-mRNA splicing as component of the spliceosome. Combines RNA-binding and PPIase activities. Binds mRNA and has a preference for single-stranded RNA molecules with poly-A and poly-U stretches, suggesting it binds to the poly(A)-region in the 3'-UTR of mRNA molecules. Catalyzes the cis-trans isomerization of proline imidic peptide bonds in proteins. Inhibits KMT2A activity; this requires proline isomerase activity. In Pongo abelii (Sumatran orangutan), this protein is Peptidyl-prolyl cis-trans isomerase E (PPIE).